We begin with the raw amino-acid sequence, 156 residues long: Endogenous retrovirus group K member 19 Pro protein (156 aa).

Residues 21–96 enclose the Peptidase A2 domain; sequence FEGLVDTGAD…IPLNLWGRDL (76 aa). Residue D26 is part of the active site. In terms of domain architecture, G-patch spans 111–156; sequence YSPTSQKIMTKMGYILGKGLGKNEDGIKIPVEAKINQKREGIGYPF.

Belongs to the peptidase A2 family. HERV class-II K(HML-2) subfamily. In terms of assembly, active as a homodimer. Post-translationally, autoproteolytically processed at the N-terminus. Expected C-terminal autoprocessing not detected. The sequence shown is that of the processed Pro protein.

It carries out the reaction Processing at the authentic HIV-1 PR recognition site and release of the mature p17 matrix and the p24 capsid protein, as a result of the cleavage of the -SQNY-|-PIVQ- cleavage site.. Retroviral proteases have roles in the processing of the primary translation products and the maturation of the viral particle. Endogenous Pro proteins may have kept, lost or modified their original function during evolution. This chain is Endogenous retrovirus group K member 19 Pro protein (ERVK-19), found in Homo sapiens (Human).